Reading from the N-terminus, the 318-residue chain is tRNA uridine(34) hydroxylase (318 aa).

Residues 123 to 217 (EDDDTVIIDA…YGKDPETKGQ (95 aa)) enclose the Rhodanese domain. The Cysteine persulfide intermediate role is filled by C177.

This sequence belongs to the TrhO family.

It catalyses the reaction uridine(34) in tRNA + AH2 + O2 = 5-hydroxyuridine(34) in tRNA + A + H2O. Functionally, catalyzes oxygen-dependent 5-hydroxyuridine (ho5U) modification at position 34 in tRNAs. The polypeptide is tRNA uridine(34) hydroxylase (Staphylococcus aureus (strain Mu3 / ATCC 700698)).